Here is a 768-residue protein sequence, read N- to C-terminus: Integrin beta-8 (768 aa).

The signal sequence occupies residues 1-42; the sequence is MCGSALGLPPAAFVRLRSCRPGPAAFLRAAWVLSLVLGLGRS. At 43–683 the chain is on the extracellular side; that stretch reads ENSRCASSHA…ECFSSPSYLR (641 aa). The PSI domain occupies 46 to 95; sequence RCASSHAVSCSECLALGPDCGWCVHEDFISGGPRSERCDIVSNLISKGCP. 25 disulfides stabilise this stretch: cysteine 47/cysteine 65, cysteine 55/cysteine 469, cysteine 58/cysteine 83, cysteine 68/cysteine 94, cysteine 211/cysteine 218, cysteine 266/cysteine 307, cysteine 407/cysteine 419, cysteine 439/cysteine 467, cysteine 471/cysteine 491, cysteine 471/cysteine 494, cysteine 481/cysteine 494, cysteine 499/cysteine 528, cysteine 511/cysteine 526, cysteine 520/cysteine 531, cysteine 533/cysteine 546, cysteine 553/cysteine 567, cysteine 561/cysteine 572, cysteine 574/cysteine 583, cysteine 585/cysteine 609, cysteine 593/cysteine 607, cysteine 601/cysteine 612, cysteine 614/cysteine 624, cysteine 627/cysteine 630, cysteine 634/cysteine 661, and cysteine 640/cysteine 657. A VWFA domain is found at 146 to 384; it reads PVDLYYLVDV…NLVVEAYQKL (239 aa). Mg(2+) is bound by residues aspartate 154 and serine 156. Aspartate 193 lines the Ca(2+) pocket. Asparagine 233 carries an N-linked (GlcNAc...) asparagine glycan. Asparagine 249, aspartate 251, proline 253, and glutamate 254 together coordinate Ca(2+). Mg(2+) is bound at residue glutamate 254. Asparagine 402 is a glycosylation site (N-linked (GlcNAc...) asparagine). N-linked (GlcNAc...) asparagine glycosylation is found at asparagine 421, asparagine 431, and asparagine 456. 4 consecutive I-EGF domains span residues 471–495, 499–547, 548–584, and 585–625; these read CEASRGGAAKCAEEAPLDSTCPQCQ, CHQE…KYCE, KDDFSCPYHHGSLCAGHGECEAGRCQCFSGWEGDRCQ, and CPSA…RFCE. Residue asparagine 648 is glycosylated (N-linked (GlcNAc...) asparagine). Residues 684–703 form a helical membrane-spanning segment; sequence IFFIIFIVTFLIGLLKILII. The Cytoplasmic portion of the chain corresponds to 704 to 768; that stretch reads RQVILQWNSS…NAHETFRCNF (65 aa).

It belongs to the integrin beta chain family. Heterodimer of an alpha and a beta subunit. Beta-8 (ITGB8) associates with alpha-V (ITGAV) to form ITGAV:ITGB8. ITGAV:ITGB8 interacts with TGFB1. In terms of tissue distribution, placenta, kidney, brain, ovary, uterus and in several transformed cells.

Its subcellular location is the cell membrane. Functionally, integrin alpha-V:beta-8 (ITGAV:ITGB8) is a receptor for fibronectin. It recognizes the sequence R-G-D in its ligands. Integrin alpha-V:beta-6 (ITGAV:ITGB6) mediates R-G-D-dependent release of transforming growth factor beta-1 (TGF-beta-1) from regulatory Latency-associated peptide (LAP), thereby playing a key role in TGF-beta-1 activation on the surface of activated regulatory T-cells (Tregs). Required during vasculogenesis. The polypeptide is Integrin beta-8 (ITGB8) (Oryctolagus cuniculus (Rabbit)).